The following is a 138-amino-acid chain: MPRPTKTRTVVSEPDVCYFKPRGVPLRMLREVGLTVDELEALMLADLQGLPHEEAGRHMNISRATFGRVVRKARKTVADALVNGMAIRIEGGNYLRTGPDGAVLFCGKCRQEWPVVSSGGTPHECPMCKKEEDKKAEK.

Belongs to the UPF0251 family.

This Desulfosudis oleivorans (strain DSM 6200 / JCM 39069 / Hxd3) (Desulfococcus oleovorans) protein is UPF0251 protein Dole_1957.